Reading from the N-terminus, the 241-residue chain is Ribonuclease PH (241 aa).

Residues R89 and 127–129 (GTR) contribute to the phosphate site.

Belongs to the RNase PH family. In terms of assembly, homohexameric ring arranged as a trimer of dimers.

It carries out the reaction tRNA(n+1) + phosphate = tRNA(n) + a ribonucleoside 5'-diphosphate. In terms of biological role, phosphorolytic 3'-5' exoribonuclease that plays an important role in tRNA 3'-end maturation. Removes nucleotide residues following the 3'-CCA terminus of tRNAs; can also add nucleotides to the ends of RNA molecules by using nucleoside diphosphates as substrates, but this may not be physiologically important. Probably plays a role in initiation of 16S rRNA degradation (leading to ribosome degradation) during starvation. This Xanthomonas axonopodis pv. citri (strain 306) protein is Ribonuclease PH.